A 611-amino-acid chain; its full sequence is Chaperone protein HtpG (611 aa).

The segment at 1 to 326 (MSETLERHAF…TEDLPLNVSR (326 aa)) is a; substrate-binding. Residues 327 to 536 (EMLQATPVLA…SGGPDLQMQR (210 aa)) form a b region. Positions 537–611 (LLRRAGRGFG…RVAAALAAQA (75 aa)) are c.

This sequence belongs to the heat shock protein 90 family. As to quaternary structure, homodimer.

Its subcellular location is the cytoplasm. Functionally, molecular chaperone. Has ATPase activity. The sequence is that of Chaperone protein HtpG from Methylobacterium sp. (strain 4-46).